The chain runs to 191 residues: Cell division protein SepF (191 aa).

The tract at residues 150–191 (TSSSPEEASPSSVSPKNTPQYSVENNTAPEPAWGNSKLSAFS) is disordered. Low complexity predominate over residues 151–164 (SSSPEEASPSSVSP). Residues 165–177 (KNTPQYSVENNTA) are compositionally biased toward polar residues.

This sequence belongs to the SepF family. As to quaternary structure, homodimer. Interacts with FtsZ.

It localises to the cytoplasm. Functionally, cell division protein that is part of the divisome complex and is recruited early to the Z-ring. Probably stimulates Z-ring formation, perhaps through the cross-linking of FtsZ protofilaments. Its function overlaps with FtsA. The protein is Cell division protein SepF of Prochlorococcus marinus (strain MIT 9312).